The primary structure comprises 68 residues: Beta-defensin 1 (68 aa).

A signal peptide spans 1–21; the sequence is MRTSYLLLFTLCLLLSEMASG. A propeptide spanning residues 22–32 is cleaved from the precursor; it reads DNFLTGLGHRS. 3 disulfides stabilise this stretch: Cys-37-Cys-66, Cys-44-Cys-59, and Cys-49-Cys-67.

It belongs to the beta-defensin family. As to quaternary structure, monomer. Homodimer.

It is found in the secreted. Its subcellular location is the membrane. Its function is as follows. Has bactericidal activity. May act as a ligand for C-C chemokine receptor CCR6. Positively regulates the sperm motility and bactericidal activity in a CCR6-dependent manner. Binds to CCR6 and triggers Ca2+ mobilization in the sperm which is important for its motility. The chain is Beta-defensin 1 (DEFB1) from Macaca mulatta (Rhesus macaque).